The primary structure comprises 374 residues: Glutamate 5-kinase (374 aa).

Lysine 9 contacts ATP. Substrate-binding residues include serine 49, aspartate 136, and asparagine 148. Residues 168–169 (TD) and 210–216 (TGGMKSK) each bind ATP. The region spanning 276-354 (SGVVRIDQGA…DEAKQLIPLV (79 aa)) is the PUA domain.

This sequence belongs to the glutamate 5-kinase family.

It localises to the cytoplasm. The enzyme catalyses L-glutamate + ATP = L-glutamyl 5-phosphate + ADP. The protein operates within amino-acid biosynthesis; L-proline biosynthesis; L-glutamate 5-semialdehyde from L-glutamate: step 1/2. Catalyzes the transfer of a phosphate group to glutamate to form L-glutamate 5-phosphate. The polypeptide is Glutamate 5-kinase (Halalkalibacterium halodurans (strain ATCC BAA-125 / DSM 18197 / FERM 7344 / JCM 9153 / C-125) (Bacillus halodurans)).